Reading from the N-terminus, the 676-residue chain is E3 ubiquitin-protein ligase ICP0 (676 aa).

An RING-type zinc finger spans residues 13–52 (CCICLDAITGAARALPCLHAFCLACIRRWLEGRPTCPLCK). Disordered regions lie at residues 101–153 (DLTA…GGRA), 266–517 (HLIP…AGAQ), and 555–676 (AAIS…AWRQ). The span at 123–153 (EAGGGAGGAEEAGEARGAGAGRAAGAAGGRA) shows a compositional bias: gly residues. Residues 286–303 (SDSDSEGSEDDSWSESEE) show a composition bias toward acidic residues. A compositionally biased stretch (low complexity) spans 304–314 (SSSGLSTSDLT). Residues 315-328 (AIDDTETEPETDAE) show a composition bias toward acidic residues. The span at 351–361 (YVSTRGRQTPA) shows a compositional bias: polar residues. 2 stretches are compositionally biased toward low complexity: residues 375 to 388 (GRAAAVSAPPSSRS) and 397 to 411 (LPAAPRAAPAAQARA). Gly residues predominate over residues 422 to 439 (GAGLGVAAGETAGWGAGS). Residues 440–450 (EEGRGERRARL) show a composition bias toward basic and acidic residues. A compositionally biased stretch (pro residues) spans 474–484 (TPAPAPAPAPA). Residues 555–597 (AAISTRAPTPSPAGRAPAADPRRAGAPALAGAARAEVGRNGNP) show a composition bias toward low complexity.

The protein belongs to the simplexviruses ICp0 family. Post-translationally, auto-ubiquitinated. Transactivation activity is possibly regulated through phosphorylation by casein kinase II.

It catalyses the reaction S-ubiquitinyl-[E2 ubiquitin-conjugating enzyme]-L-cysteine + [acceptor protein]-L-lysine = [E2 ubiquitin-conjugating enzyme]-L-cysteine + N(6)-ubiquitinyl-[acceptor protein]-L-lysine.. In terms of biological role, evades nuclear antiviral defenses triggered by dsDNA viruses. Acts during the initial stages of lytic infection and the reactivation of latent viral genome. Prevents the antiviral effect of nuclear bodies by degrading host PML and SP100. The protein is E3 ubiquitin-protein ligase ICP0 (BICP0) of Bovine herpesvirus 1.1 (strain Cooper) (BoHV-1).